The sequence spans 132 residues: Ribosome-binding factor A (132 aa).

The disordered stretch occupies residues 113–132 (EANSTRAKDDDEADTPAKDD).

It belongs to the RbfA family. In terms of assembly, monomer. Binds 30S ribosomal subunits, but not 50S ribosomal subunits or 70S ribosomes.

It is found in the cytoplasm. Functionally, one of several proteins that assist in the late maturation steps of the functional core of the 30S ribosomal subunit. Associates with free 30S ribosomal subunits (but not with 30S subunits that are part of 70S ribosomes or polysomes). Required for efficient processing of 16S rRNA. May interact with the 5'-terminal helix region of 16S rRNA. The sequence is that of Ribosome-binding factor A from Burkholderia cenocepacia (strain HI2424).